An 852-amino-acid polypeptide reads, in one-letter code: Replication factor C small subunit (852 aa).

The region spanning 183–306 is the DOD-type homing endonuclease domain; that stretch reads WLGYFMGSGY…IAYALASFGI (124 aa).

It belongs to the activator 1 small subunits family. RfcS subfamily. In terms of assembly, heteromultimer composed of three to four small subunits (RfcS) and one to two large subunits (RfcL). In terms of processing, this protein undergoes a protein self splicing that involves a post-translational excision of the intervening region (intein) followed by peptide ligation.

Its function is as follows. Part of the RFC clamp loader complex which loads the PCNA sliding clamp onto DNA. The complex possesses DNA-dependent ATPase activity which is further stimulated by PCNA. This chain is Replication factor C small subunit (rfcS), found in Pyrococcus furiosus (strain ATCC 43587 / DSM 3638 / JCM 8422 / Vc1).